Here is a 170-residue protein sequence, read N- to C-terminus: UPF0220 protein C8D2.02c (170 aa).

The next 4 membrane-spanning stretches (helical) occupy residues 23 to 43, 54 to 74, 101 to 121, and 136 to 156; these read LGVY…VDAA, LHIT…IVIV, ILFI…TVFI, and MGSA…ALWI.

Belongs to the UPF0220 family.

The protein localises to the membrane. The protein is UPF0220 protein C8D2.02c of Schizosaccharomyces pombe (strain 972 / ATCC 24843) (Fission yeast).